Consider the following 214-residue polypeptide: Thiamine-phosphate synthase (214 aa).

4-amino-2-methyl-5-(diphosphooxymethyl)pyrimidine-binding positions include 37 to 41 (QYREK) and Asn-73. Mg(2+) is bound by residues Asp-74 and Asp-93. Position 112 (Ser-112) interacts with 4-amino-2-methyl-5-(diphosphooxymethyl)pyrimidine. 139 to 141 (TIS) contributes to the 2-[(2R,5Z)-2-carboxy-4-methylthiazol-5(2H)-ylidene]ethyl phosphate binding site. Lys-142 provides a ligand contact to 4-amino-2-methyl-5-(diphosphooxymethyl)pyrimidine. 2-[(2R,5Z)-2-carboxy-4-methylthiazol-5(2H)-ylidene]ethyl phosphate contacts are provided by residues Gly-171 and 191–192 (IS).

It belongs to the thiamine-phosphate synthase family. Requires Mg(2+) as cofactor.

The catalysed reaction is 2-[(2R,5Z)-2-carboxy-4-methylthiazol-5(2H)-ylidene]ethyl phosphate + 4-amino-2-methyl-5-(diphosphooxymethyl)pyrimidine + 2 H(+) = thiamine phosphate + CO2 + diphosphate. It catalyses the reaction 2-(2-carboxy-4-methylthiazol-5-yl)ethyl phosphate + 4-amino-2-methyl-5-(diphosphooxymethyl)pyrimidine + 2 H(+) = thiamine phosphate + CO2 + diphosphate. It carries out the reaction 4-methyl-5-(2-phosphooxyethyl)-thiazole + 4-amino-2-methyl-5-(diphosphooxymethyl)pyrimidine + H(+) = thiamine phosphate + diphosphate. It functions in the pathway cofactor biosynthesis; thiamine diphosphate biosynthesis; thiamine phosphate from 4-amino-2-methyl-5-diphosphomethylpyrimidine and 4-methyl-5-(2-phosphoethyl)-thiazole: step 1/1. Its function is as follows. Condenses 4-methyl-5-(beta-hydroxyethyl)thiazole monophosphate (THZ-P) and 2-methyl-4-amino-5-hydroxymethyl pyrimidine pyrophosphate (HMP-PP) to form thiamine monophosphate (TMP). The chain is Thiamine-phosphate synthase from Listeria monocytogenes serotype 4a (strain HCC23).